Reading from the N-terminus, the 313-residue chain is DNA-directed RNA polymerase subunit alpha (313 aa).

Residues 1–229 form an alpha N-terminal domain (alpha-NTD) region; that stretch reads MNSSNLLMEC…NLFKSIGEQK (229 aa). An alpha C-terminal domain (alpha-CTD) region spans residues 243–313; it reads IKPIDPYTHI…LKNKLGIVLK (71 aa).

It belongs to the RNA polymerase alpha chain family. In plastids the minimal PEP RNA polymerase catalytic core is composed of four subunits: alpha, beta, beta', and beta''. When a (nuclear-encoded) sigma factor is associated with the core the holoenzyme is formed, which can initiate transcription.

The protein localises to the plastid. The protein resides in the chloroplast. The catalysed reaction is RNA(n) + a ribonucleoside 5'-triphosphate = RNA(n+1) + diphosphate. In terms of biological role, DNA-dependent RNA polymerase catalyzes the transcription of DNA into RNA using the four ribonucleoside triphosphates as substrates. This is DNA-directed RNA polymerase subunit alpha from Thalassiosira pseudonana (Marine diatom).